Reading from the N-terminus, the 218-residue chain is Cytidylate kinase (218 aa).

10–18 (GPAAAGKST) is a binding site for ATP.

It belongs to the cytidylate kinase family. Type 1 subfamily.

The protein resides in the cytoplasm. It catalyses the reaction CMP + ATP = CDP + ADP. It carries out the reaction dCMP + ATP = dCDP + ADP. This chain is Cytidylate kinase, found in Staphylococcus haemolyticus (strain JCSC1435).